A 942-amino-acid polypeptide reads, in one-letter code: Zinc finger protein 865 (942 aa).

A disordered region spans residues 66–106 (FASTSTSKPKEFKVEAPPSSSLSPSKKPDIATTQQFNNQPP). Polar residues predominate over residues 96–106 (ATTQQFNNQPP). 20 C2H2-type zinc fingers span residues 172–194 (FPCT…MLVH), 200–222 (YECN…RRCH), 282–304 (FTCT…QIIH), 310–332 (FSCS…VKTH), 338–360 (VQCE…QATH), 367–389 (YKCE…KQVH), 466–488 (FCCN…ERIH), 494–516 (HQCS…HVVH), 522–544 (YKCE…KQIH), 564–586 (FGCT…KELH), 592–614 (YVCD…KLVH), 678–700 (FSCS…KYVH), 706–728 (LACN…RRTH), 734–756 (FTCS…QRCH), 762–784 (YRCT…KVVH), 790–812 (YKCA…QRLH), 818–840 (QRCP…QRVH), 846–868 (YRCD…QRSH), 874–896 (LRCS…VQTH), and 902–924 (FKCG…RHAH).

Belongs to the krueppel C2H2-type zinc-finger protein family.

It localises to the nucleus. May be involved in transcriptional regulation. The sequence is that of Zinc finger protein 865 (znf865) from Xenopus tropicalis (Western clawed frog).